The chain runs to 167 residues: Zinc finger CCCH domain-containing protein 3 (167 aa).

Residues 63–91 form a C3H1-type zinc finger; sequence AAAIGVCQHFVRTGTCKFGDSCRYFHPKP. The segment covering 89–101 has biased composition (pro residues); the sequence is PKPPPANPGPAPS. A disordered region spans residues 89 to 167; that stretch reads PKPPPANPGP…YPPFPFVDWG (79 aa). The span at 108–120 shows a compositional bias: polar residues; it reads MAQQSNIQGSQPN. The span at 149–167 shows a compositional bias: pro residues; it reads SLRPPPEGGYPPFPFVDWG.

The protein is Zinc finger CCCH domain-containing protein 3 of Oryza sativa subsp. japonica (Rice).